The following is a 925-amino-acid chain: Periplasmic nitrate reductase (925 aa).

The segment at residues 1–30 is a signal peptide (tat-type signal); that stretch reads MDRREFIKSSAAAAACSAAGIAVPSSLSAA. The 57-residue stretch at 36–92 folds into the 4Fe-4S Mo/W bis-MGD-type domain; sequence WRWDKSACRFCGTGCGIMVATKNGKIVAVKGDPLAPVNRGLNCIKGYFNAKIMYGED. C43, C46, C50, and C78 together coordinate [4Fe-4S] cluster. Mo-bis(molybdopterin guanine dinucleotide) is bound by residues K80, Q148, N173, C177, 210–217, M418, Q422, N528, 553–554, K576, D603, and 815–824; these read WGANMAEM, SD, and TGRVLEHWHS. W891 serves as a coordination point for substrate. The Mo-bis(molybdopterin guanine dinucleotide) site is built by N899 and K916.

The protein belongs to the prokaryotic molybdopterin-containing oxidoreductase family. NasA/NapA/NarB subfamily. As to quaternary structure, component of the periplasmic nitrate reductase NapAB complex composed of NapA and NapB. The cofactor is [4Fe-4S] cluster. Mo-bis(molybdopterin guanine dinucleotide) is required as a cofactor. In terms of processing, predicted to be exported by the Tat system. The position of the signal peptide cleavage has not been experimentally proven.

The protein resides in the periplasm. It catalyses the reaction 2 Fe(II)-[cytochrome] + nitrate + 2 H(+) = 2 Fe(III)-[cytochrome] + nitrite + H2O. In terms of biological role, catalytic subunit of the periplasmic nitrate reductase complex NapAB. Receives electrons from NapB and catalyzes the reduction of nitrate to nitrite. This chain is Periplasmic nitrate reductase, found in Campylobacter fetus subsp. fetus (strain 82-40).